Here is a 231-residue protein sequence, read N- to C-terminus: Large ribosomal subunit protein uL1 (231 aa).

It belongs to the universal ribosomal protein uL1 family. Part of the 50S ribosomal subunit.

Binds directly to 23S rRNA. The L1 stalk is quite mobile in the ribosome, and is involved in E site tRNA release. Its function is as follows. Protein L1 is also a translational repressor protein, it controls the translation of the L11 operon by binding to its mRNA. The protein is Large ribosomal subunit protein uL1 of Staphylococcus carnosus (strain TM300).